Consider the following 316-residue polypeptide: Methionyl-tRNA formyltransferase (316 aa).

Position 111-114 (111-114 (GLLP)) interacts with (6S)-5,6,7,8-tetrahydrofolate.

It belongs to the Fmt family.

The catalysed reaction is L-methionyl-tRNA(fMet) + (6R)-10-formyltetrahydrofolate = N-formyl-L-methionyl-tRNA(fMet) + (6S)-5,6,7,8-tetrahydrofolate + H(+). Attaches a formyl group to the free amino group of methionyl-tRNA(fMet). The formyl group appears to play a dual role in the initiator identity of N-formylmethionyl-tRNA by promoting its recognition by IF2 and preventing the misappropriation of this tRNA by the elongation apparatus. The protein is Methionyl-tRNA formyltransferase of Chlamydia trachomatis serovar L2b (strain UCH-1/proctitis).